Reading from the N-terminus, the 262-residue chain is Ribose-5-phosphate isomerase A (262 aa).

Substrate contacts are provided by residues 33-36, 89-92, and 102-105; these read TGST, DGAD, and KGGG. Catalysis depends on E111, which acts as the Proton acceptor. K129 serves as a coordination point for substrate.

The protein belongs to the ribose 5-phosphate isomerase family. As to quaternary structure, homodimer.

The enzyme catalyses aldehydo-D-ribose 5-phosphate = D-ribulose 5-phosphate. Its pathway is carbohydrate degradation; pentose phosphate pathway; D-ribose 5-phosphate from D-ribulose 5-phosphate (non-oxidative stage): step 1/1. Catalyzes the reversible conversion of ribose-5-phosphate to ribulose 5-phosphate. The sequence is that of Ribose-5-phosphate isomerase A from Ruegeria sp. (strain TM1040) (Silicibacter sp.).